A 220-amino-acid polypeptide reads, in one-letter code: Ribonuclease HII (220 aa).

Residues Lys32–Cys220 form the RNase H type-2 domain. A divalent metal cation-binding residues include Asp38, Glu39, and Asp130.

The protein belongs to the RNase HII family. Requires Mn(2+) as cofactor. It depends on Mg(2+) as a cofactor.

It localises to the cytoplasm. It catalyses the reaction Endonucleolytic cleavage to 5'-phosphomonoester.. Endonuclease that specifically degrades the RNA of RNA-DNA hybrids. The protein is Ribonuclease HII of Brucella canis (strain ATCC 23365 / NCTC 10854 / RM-666).